A 159-amino-acid polypeptide reads, in one-letter code: 16 kDa outer membrane lipoprotein (159 aa).

An N-terminal signal peptide occupies residues 1–21 (MNKKIFTLFLVVAASAIFAVS). A lipid anchor (N-palmitoyl cysteine) is attached at Cys-22. Residue Cys-22 is the site of S-diacylglycerol cysteine attachment.

It is found in the cell outer membrane. This is 16 kDa outer membrane lipoprotein (smpA) from Brachyspira hyodysenteriae (Treponema hyodysenteriae).